The sequence spans 364 residues: Chorismate synthase (364 aa).

The disordered stretch occupies residues 41-60 (MQHDLDRRRPGTSRYTTARR). 2 residues coordinate NADP(+): Arg48 and Arg54. FMN is bound by residues 125–127 (RSS), 238–239 (NA), Gly278, 293–297 (KPTSS), and Arg319.

The protein belongs to the chorismate synthase family. Homotetramer. FMNH2 is required as a cofactor.

It catalyses the reaction 5-O-(1-carboxyvinyl)-3-phosphoshikimate = chorismate + phosphate. Its pathway is metabolic intermediate biosynthesis; chorismate biosynthesis; chorismate from D-erythrose 4-phosphate and phosphoenolpyruvate: step 7/7. In terms of biological role, catalyzes the anti-1,4-elimination of the C-3 phosphate and the C-6 proR hydrogen from 5-enolpyruvylshikimate-3-phosphate (EPSP) to yield chorismate, which is the branch point compound that serves as the starting substrate for the three terminal pathways of aromatic amino acid biosynthesis. This reaction introduces a second double bond into the aromatic ring system. This Shewanella baltica (strain OS185) protein is Chorismate synthase.